Reading from the N-terminus, the 271-residue chain is MQYWGKIIGVAVALLMGGGFWGVVLGLLIGHMFDKARSRKMAWFANQRERQALFFATTFEVMGHLTKSKGRVTEADIHIASQLMDRMNLHGASRTAAQNAFRVGKSDNYPLREKMRQFRSVCFGRFDLIRMFLEIQIQAAFADGSLHPNERAVLYVIAEELGISRAQFDQFLRMMQGGAQFGGGYQQQSGGGNWQQAQRGPTLEDACNVLGVKPTDDATTIKRAYRKLMSEHHPDKLVAKGLPPEMMEMAKQKAQEIQQAYELIKQQKGFK.

At 1–6 (MQYWGK) the chain is on the periplasmic side. Residues 7–31 (IIGVAVALLMGGGFWGVVLGLLIGH) traverse the membrane as a helical segment. The Cytoplasmic portion of the chain corresponds to 32 to 271 (MFDKARSRKM…ELIKQQKGFK (240 aa)). The region spanning 205–271 (DACNVLGVKP…ELIKQQKGFK (67 aa)) is the J domain.

As to quaternary structure, homodimer.

It is found in the cell inner membrane. In terms of biological role, regulatory DnaK co-chaperone. Direct interaction between DnaK and DjlA is needed for the induction of the wcaABCDE operon, involved in the synthesis of a colanic acid polysaccharide capsule, possibly through activation of the RcsB/RcsC phosphotransfer signaling pathway. The colanic acid capsule may help the bacterium survive conditions outside the host. The sequence is that of Co-chaperone protein DjlA from Escherichia coli O157:H7.